Reading from the N-terminus, the 1454-residue chain is MAGEITPSGSRRSWLSSGAASLARSLRDGDDPFRRSAAASRRDAGDDEENLRWAALEKLPTYDRMRRGILRKAVDGGGDGEGAGSLFKADEVDIANLDPREGRELMERVFKAVEDDNERFLRRFRDRLDQVGIELPKIEVRYQHLDIEADVHVGKRALPTLLNATINTLEGLVSLFISSNKRKLKILNDVNGIIKPSRMTLLLGPPSSGKSTLMRALTGKPDKNLKVSGEITYCGHTFKEFYPERTSAYVSQHDLHNPEMTVRETLDFSRRCLGSGARYDMLSELTRRERNAGIKPDPEIDALMKATVVEGKQNNIVTDLVLKALGLDICADTIVGGAMIRGISGGQKKRVTTGEMLTGPATALFMDEISTGLDSSSTFQIVKYIRQVTHVMNATVMMSLLQPPPETYALFDDIVLIAEGYIVYHGPRENILEFFESAGFRCPERKGVADFLQEVTSRKDQQQYWFLEQDHYRYVSVEEFAQNFKKFHVGQKLQKELQVPYDKSKTHPAALTTKKYGLSSLESLKAVMSREWLLMKRNSFLFIFKAFQLFVLGFITMTLFLRTKMPHEKFSDTSKYVGALTASLITIMFNGFGELQLTIDKLPIFYKQRDFLFFPAWTYGLANIILKVPLSLMESSLWIVLTYYVVGFAPAAGRFFKQFLAYFWTHQMALALFRLLGAILRSMVVANTFGMFVLLLIFLFGGFLVSRKDIKPWWIWGYWTSPMMYSNNALSVNEFLASRWAIPNNDSSISAPTIGKAFLQSKGYFTGEWGYWLSIGAMIGFMIVFNILYLCALTFLRPIGSASTVVSDDDTKSELEAESNQEQMSEVINGTNGTENRRSQRGMVLPFQPLSLSFNHMNYYVDMPAEMKAQGFTESRLQLLSDISGAFRPGVLTALVGVSGAGKTTLMDVLAGRKTSGTIEGDIKLSGYPKKQETFARISGYCEQTDIHSPNLTVYESIVYSAWLRLSSEVDKNTRKVFVEEVMSLVELDVLRDALVGLPGVSGLSTEQRKRLTIAVELVANPSIIFMDEPTSGLDARAAAIVMRTVRNTVNTGRTVVCTIHQPSIDIFESFDELLLLKRGGRVIYAGQLGLHSQILVEYFEAIPGVPKITEGYNPATWMLEVSSSLAEARLDIDFAEVYANSALYRSNQELIKQLSVPPPGFQDLSFPTKYSQNFLNQCVANTWKQFQSYWKDPPYNAMRYVMTLLYGLVFGTVFWRRGKNIESVNDLNNLLGATYAAVFFLGAANLLTLLPVVSVERTVFYREKAAGMYSPLSYAFAQGFVEFCYSAVQGVLYTILIYSMIGYEWKADKFFYFLFFMIAAFAYFTLFSMMLVACTASEMLAAVLVSFVLSSWNNFAGFIIPRPLIPVWWRWFYWANPVSWTIYGVIASQFADSDRVVTVPGQSTTMVVKDFLEKNMGFKHDFLGYVVLAHFGYVIIFFFLFGYGIKCLNFQKR.

Positions 23-47 are disordered; the sequence is ARSLRDGDDPFRRSAAASRRDAGDD. Basic and acidic residues predominate over residues 25–44; that stretch reads SLRDGDDPFRRSAAASRRDA. Asparagine 163 carries an N-linked (GlcNAc...) asparagine glycan. The region spanning 170 to 444 is the ABC transporter 1 domain; sequence EGLVSLFISS…FESAGFRCPE (275 aa). 204–211 provides a ligand contact to ATP; sequence GPPSSGKS. Asparagine 393 carries N-linked (GlcNAc...) asparagine glycosylation. In terms of domain architecture, ABC transmembrane type-2 1 spans 524–735; the sequence is LKAVMSREWL…SNNALSVNEF (212 aa). The next 6 membrane-spanning stretches (helical) occupy residues 540 to 560, 577 to 597, 613 to 630, 637 to 656, 659 to 679, and 684 to 704; these read FLFIFKAFQLFVLGFITMTLF, VGALTASLITIMFNGFGELQL, FFPAWTYGLANIILKVPL, LWIVLTYYVVGFAPAAGRFF, FLAYFWTHQMALALFRLLGAI, and VVANTFGMFVLLLIFLFGGFL. N-linked (GlcNAc...) asparagine glycosylation occurs at asparagine 745. The chain crosses the membrane as a helical span at residues 775-795; that stretch reads IGAMIGFMIVFNILYLCALTF. Residues 804–823 form a disordered region; the sequence is TVVSDDDTKSELEAESNQEQ. N-linked (GlcNAc...) asparagine glycosylation is found at asparagine 829 and asparagine 832. The 253-residue stretch at 852–1104 folds into the ABC transporter 2 domain; the sequence is LSFNHMNYYV…ILVEYFEAIP (253 aa). 897–904 provides a ligand contact to ATP; sequence GVSGAGKT. A glycan (N-linked (GlcNAc...) asparagine) is linked at asparagine 951. Residues 1178-1391 form the ABC transmembrane type-2 2 domain; sequence QCVANTWKQF…TIYGVIASQF (214 aa). A run of 7 helical transmembrane segments spans residues 1196 to 1216, 1236 to 1256, 1284 to 1304, 1314 to 1334, 1341 to 1361, 1372 to 1392, and 1423 to 1443; these read YNAMRYVMTLLYGLVFGTVFW, YAAVFFLGAANLLTLLPVVSV, FCYSAVQGVLYTILIYSMIGY, FLFFMIAAFAYFTLFSMMLVA, LAAVLVSFVLSSWNNFAGFII, WFYWANPVSWTIYGVIASQFA, and FLGYVVLAHFGYVIIFFFLFG.

It belongs to the ABC transporter superfamily. ABCG family. PDR (TC 3.A.1.205) subfamily. In terms of tissue distribution, specifically expressed in the vasculature of roots, stems, panicles, sheaths and leaves.

The protein localises to the cell membrane. Functionally, ABC transporter modulating cadmium (Cd) import, thus controlling Cd(2+) accumulation to prevent phytotoxicity. Confers high tolerance to Cd in yeast. Prevents leaf bacteria proliferation, such as Xanthomonas oryzae pv. oryzicola (Xoc) RS105 and X.oryzae pv. oryzae (Xoo) PXO99, by triggering Cd accumulation, which in turn impairs bacterial virulence factors. The chain is ABC transporter G family member 43 from Oryza sativa subsp. japonica (Rice).